The chain runs to 438 residues: tRNA modification GTPase MnmE (438 aa).

3 residues coordinate (6S)-5-formyl-5,6,7,8-tetrahydrofolate: R20, E79, and K119. The TrmE-type G domain occupies 215–360 (GVEVAIVGPP…LEAALAARVG (146 aa)). GTP is bound by residues 225-230 (NAGKSS), 244-250 (SDEAGTT), and 269-272 (DTAG). S229 and T250 together coordinate Mg(2+). K438 provides a ligand contact to (6S)-5-formyl-5,6,7,8-tetrahydrofolate.

Belongs to the TRAFAC class TrmE-Era-EngA-EngB-Septin-like GTPase superfamily. TrmE GTPase family. In terms of assembly, homodimer. Heterotetramer of two MnmE and two MnmG subunits. It depends on K(+) as a cofactor.

The protein localises to the cytoplasm. In terms of biological role, exhibits a very high intrinsic GTPase hydrolysis rate. Involved in the addition of a carboxymethylaminomethyl (cmnm) group at the wobble position (U34) of certain tRNAs, forming tRNA-cmnm(5)s(2)U34. This chain is tRNA modification GTPase MnmE, found in Parvibaculum lavamentivorans (strain DS-1 / DSM 13023 / NCIMB 13966).